Reading from the N-terminus, the 65-residue chain is Large ribosomal subunit protein bL35 (65 aa).

The segment at 1–26 is disordered; it reads MPKIKTVRGAAKRFKKTASGGFKRKQ. Over residues 10–26 the composition is skewed to basic residues; it reads AAKRFKKTASGGFKRKQ.

Belongs to the bacterial ribosomal protein bL35 family.

The sequence is that of Large ribosomal subunit protein bL35 from Actinobacillus succinogenes (strain ATCC 55618 / DSM 22257 / CCUG 43843 / 130Z).